The sequence spans 364 residues: D-alanine--D-alanine ligase (364 aa).

The ATP-grasp domain maps to Lys134–Thr344. Asn167–Glu222 contacts ATP. Residues Asp297, Glu311, and Asn313 each coordinate Mg(2+).

It belongs to the D-alanine--D-alanine ligase family. Mg(2+) serves as cofactor. Requires Mn(2+) as cofactor.

It localises to the cytoplasm. The enzyme catalyses 2 D-alanine + ATP = D-alanyl-D-alanine + ADP + phosphate + H(+). It participates in cell wall biogenesis; peptidoglycan biosynthesis. Functionally, cell wall formation. The polypeptide is D-alanine--D-alanine ligase (Borrelia recurrentis (strain A1)).